Consider the following 138-residue polypeptide: Small ribosomal subunit protein uS11c (138 aa).

The protein belongs to the universal ribosomal protein uS11 family. Part of the 30S ribosomal subunit.

The protein localises to the plastid. Its subcellular location is the chloroplast. The polypeptide is Small ribosomal subunit protein uS11c (Illicium oligandrum (Star anise)).